The primary structure comprises 305 residues: uncharacterized protein (305 aa).

A compositionally biased stretch (basic residues) spans 1 to 10 (MLWAQRKKRK). The disordered stretch occupies residues 1–30 (MLWAQRKKRKATTETTEDKPAESHRPNDSW). Residues 16–27 (TEDKPAESHRPN) show a composition bias toward basic and acidic residues. Position 39 is a phosphoserine (Ser-39). Residues 92 to 101 (QKISGTSVSK) are compositionally biased toward polar residues. The disordered stretch occupies residues 92-114 (QKISGTSVSKEMQRESGKSPSME). A Phosphoserine modification is found at Ser-158. Positions 197–208 (SHHGNQSHQNHN) are enriched in low complexity. The interval 197 to 305 (SHHGNQSHQN…VNRRNQIYDS (109 aa)) is disordered. Polar residues-rich tracts occupy residues 209–221 (TYPC…SRSV) and 231–244 (LSHQ…SHQN). Low complexity predominate over residues 247–293 (GHPSQQGHSSHSNQQGHLGLSSQQGHPSQSSHQSHQGQPGHPNHQSH). Positions 294–305 (SLVNRRNQIYDS) are enriched in polar residues.

This is an uncharacterized protein from Rattus norvegicus (Rat).